The following is a 297-amino-acid chain: Pyridoxal 5'-phosphate synthase subunit PdxS (297 aa).

D27 contacts D-ribose 5-phosphate. The Schiff-base intermediate with D-ribose 5-phosphate role is filled by K84. Position 156 (G156) interacts with D-ribose 5-phosphate. Residue R168 participates in D-glyceraldehyde 3-phosphate binding. Residues G217 and 238-239 (GS) contribute to the D-ribose 5-phosphate site.

Belongs to the PdxS/SNZ family. As to quaternary structure, in the presence of PdxT, forms a dodecamer of heterodimers.

The catalysed reaction is aldehydo-D-ribose 5-phosphate + D-glyceraldehyde 3-phosphate + L-glutamine = pyridoxal 5'-phosphate + L-glutamate + phosphate + 3 H2O + H(+). Its pathway is cofactor biosynthesis; pyridoxal 5'-phosphate biosynthesis. Its function is as follows. Catalyzes the formation of pyridoxal 5'-phosphate from ribose 5-phosphate (RBP), glyceraldehyde 3-phosphate (G3P) and ammonia. The ammonia is provided by the PdxT subunit. Can also use ribulose 5-phosphate and dihydroxyacetone phosphate as substrates, resulting from enzyme-catalyzed isomerization of RBP and G3P, respectively. This is Pyridoxal 5'-phosphate synthase subunit PdxS from Corynebacterium efficiens (strain DSM 44549 / YS-314 / AJ 12310 / JCM 11189 / NBRC 100395).